A 286-amino-acid polypeptide reads, in one-letter code: Peroxisomal membrane protein pex14 (286 aa).

The short motif at 61–69 (TSNFVSRDW) is the SH3-binding element. Residues 122 to 214 (KILENLDEQT…REISSLRCLQ (93 aa)) are a coiled coil. Residues 218–239 (KKDDTFATTSNSSIPVLENPLD) are disordered.

The protein belongs to the peroxin-14 family. As to quaternary structure, interacts with PEX13 (via SH3 domain); forming the PEX13-PEX14 docking complex. Interacts with PEX5 (via WxxxF/Y motifs).

It localises to the peroxisome membrane. In terms of biological role, component of the PEX13-PEX14 docking complex, a translocon channel that specifically mediates the import of peroxisomal cargo proteins bound to PEX5 receptor. The PEX13-PEX14 docking complex forms a large import pore which can be opened to a diameter of about 9 nm. Mechanistically, PEX5 receptor along with cargo proteins associates with the PEX14 subunit of the PEX13-PEX14 docking complex in the cytosol, leading to the insertion of the receptor into the organelle membrane with the concomitant translocation of the cargo into the peroxisome matrix. The chain is Peroxisomal membrane protein pex14 (pex14) from Schizosaccharomyces pombe (strain 972 / ATCC 24843) (Fission yeast).